The primary structure comprises 493 residues: Fizzy-related protein homolog (493 aa).

Disordered stretches follow at residues 31–51 (LTPANSPVSSPSKHGDRFIPS), 64–88 (INENEKSPSQNRKAKDATSDNGKDG), and 105–166 (EKVQ…SPRK). Thr-32 is modified (phosphothreonine). The segment covering 32 to 42 (TPANSPVSSPS) has biased composition (polar residues). Ser-36 is modified (phosphoserine). The residue at position 69 (Lys-69) is an N6-acetyllysine. 2 stretches are compositionally biased toward basic and acidic residues: residues 76-86 (KAKDATSDNGK) and 106-126 (KVQDPQTEDRRLQPSTPEHKG). Phosphoserine is present on residues Ser-133, Ser-138, Ser-146, and Ser-151. Residues 146–160 (SPYSLSPVSNKSQKL) are compositionally biased toward polar residues. Residue Lys-159 is modified to N6-acetyllysine. 7 WD repeats span residues 182–222 (PELQ…VTRL), 227–266 (VEGDSVTSVGWSERGNLVAVGTHKGFVQIWDAAAGKKLSM), 269–306 (GHTARVGALAWNADQLSSGSRDRMILQRDIRTPPLQSE), 311–350 (GHRQEVCGLKWSTDHQLLASGGNDNKLLVWNHSSLSPVQQ), 353–395 (EHLA…PLQC), 397–438 (DTGS…QVAK), and 441–480 (GHSYRVLYLAMSPDGEAIVTGAGDETLRFWNVFSKTRSTK).

The protein belongs to the WD repeat CDC20/Fizzy family. As to quaternary structure, the unphosphorylated form interacts with APC/C during mitosis. Interacts with NINL. Interacts (in complex with the anaphase promoting complex APC) with MAD2L2; inhibits FZR1-mediated APC/C activation. Interacts with SIRT2. Interacts with USP37. Interacts (via WD repeats) with MAK. Interacts with RBBP8/CtIP; this interaction leads to RBBP8 proteasomal degradation. Interacts with HECW2. Interacts with SASS6; the interaction is regulated by CENATAC and leads to SASS6 proteasomal degradation. Interacts (via N-terminus) with CCNF. Interacts with CDC6. Interacts with TK1 (via the KEN box). Post-translationally, acetylated. Deacetylated by SIRT2 at Lys-69 and Lys-159; deacetylation enhances the interaction of FZR1 with CDC27, leading to activation of anaphase promoting complex/cyclosome (APC/C). Following DNA damage, it is dephosphorylated by CDC14B in G2 phase, leading to its reassociation with the APC/C, and allowing an efficient G2 DNA damage checkpoint. Phosphorylated by MAK.

Its pathway is protein modification; protein ubiquitination. Substrate-specific adapter for the anaphase promoting complex/cyclosome (APC/C) E3 ubiquitin-protein ligase complex. Associates with the APC/C in late mitosis, in replacement of CDC20, and activates the APC/C during anaphase and telophase. The APC/C remains active in degrading substrates to ensure that positive regulators of the cell cycle do not accumulate prematurely. At the G1/S transition FZR1 is phosphorylated, leading to its dissociation from the APC/C. Following DNA damage, it is required for the G2 DNA damage checkpoint: its dephosphorylation and reassociation with the APC/C leads to the ubiquitination of PLK1, preventing entry into mitosis. Acts as an adapter for APC/C to target the DNA-end resection factor RBBP8/CtIP for ubiquitination and subsequent proteasomal degradation. Through the regulation of RBBP8/CtIP protein turnover, may play a role in DNA damage response, favoring DNA double-strand repair through error-prone non-homologous end joining (NHEJ) over error-free, RBBP8-mediated homologous recombination (HR). The sequence is that of Fizzy-related protein homolog (Fzr1) from Mus musculus (Mouse).